A 1186-amino-acid chain; its full sequence is Pumilio homolog 1 (1186 aa).

Residue Ser2 is modified to N-acetylserine. Position 19 is a phosphoserine (Ser19). The segment at 22 to 73 (LKHHPQEPANPNMPVVLTSGTGSQAQPQPAANQALAAGTHSSPVPGSIGVAG) is disordered. The segment covering 45–58 (QAQPQPAANQALAA) has biased composition (low complexity). Ser75, Ser98, and Ser106 each carry phosphoserine. Thr112 bears the Phosphothreonine mark. Phosphoserine is present on residues Ser124, Ser159, Ser197, Ser209, and Ser229. The disordered stretch occupies residues 233–272 (SCLRKGGFGPRDADSDENDKGEKKNKGTFDGDKLGDLKEE). Residues 250 to 272 (NDKGEKKNKGTFDGDKLGDLKEE) show a composition bias toward basic and acidic residues. Position 305 is a phosphoserine (Ser305). Positions 485 to 502 (TNSANQQTTPQAQQGQQQ) are enriched in low complexity. Disordered stretches follow at residues 485–524 (TNSA…GQQT) and 613–648 (AGTT…FYGN). A compositionally biased stretch (polar residues) spans 511–524 (RPLTPNQNQQGQQT). Thr514 is modified (phosphothreonine). Residues 626–639 (QQPQPQPQQQPNNN) show a composition bias toward low complexity. Residues Ser709 and Ser714 each carry the phosphoserine modification. Residues 742-775 (GPVGMPLPSQGPGHSQTPPPSLSSHGSSSSLNLG) form a disordered region. Residues 763–775 (LSSHGSSSSLNLG) show a composition bias toward low complexity. Arg796 is subject to Omega-N-methylarginine. Residues Ser806 and Ser822 each carry the phosphoserine modification. The PUM-HD domain occupies 828-1168 (GRSRLLEDFR…HILAKLEKYY (341 aa)). Pumilio repeat units lie at residues 848–883 (EIAG…LVFN), 884–919 (EILQ…ALAE), 920–955 (RIRG…EMVR), 956–991 (ELDG…FIID), 992–1027 (AFKG…PILE), 1028–1063 (ELHQ…KIVA), 1064–1099 (EIRG…VLID), and 1103–1142 (TMND…IVMH). An adenine-nucleotide binding in RNA target region spans residues 863 to 867 (SRFIQ). A uracil-nucleotide binding in RNA target region spans residues 899 to 903 (NYVIQ). Residues 935 to 939 (CRVIQ) form an adenine-nucleotide binding in RNA target region. Residues 971–975 (NHVVQ) are non-specific-nucleotide binding in RNA target. Residues 1007-1011 (CRVIQ) form an adenine-nucleotide binding in RNA target region. Positions 1043-1047 (NYVIQ) are uracil-nucleotide binding in RNA target. 2 guanine-nucleotide binding in RNA target regions span residues 1079-1083 (SNVVE) and 1080-1083 (NVVE). A uracil-nucleotide binding in RNA target region spans residues 1122-1126 (NYVVQ).

In terms of assembly, recruits the CCR4-POP2-NOT deadenylase leading to translational inhibition and mRNA degradation. Interacts with TRIM71 (via NHL repeats) in an RNA-dependent manner. Post-translationally, phosphorylation at Ser-714 promotes RNA-binding activity. Following growth factor stimulation phosphorylated at Ser-714, promoting binding to the 3'-UTR of CDKN1B/p27 mRNA.

Its subcellular location is the cytoplasm. The protein localises to the P-body. It localises to the cytoplasmic granule. Its function is as follows. Sequence-specific RNA-binding protein that acts as a post-transcriptional repressor by binding the 3'-UTR of mRNA targets. Binds to an RNA consensus sequence, the Pumilio Response Element (PRE), 5'-UGUANAUA-3', that is related to the Nanos Response Element (NRE). Mediates post-transcriptional repression of transcripts via different mechanisms: acts via direct recruitment of the CCR4-POP2-NOT deadenylase leading to translational inhibition and mRNA degradation. Also mediates deadenylation-independent repression by promoting accessibility of miRNAs. Following growth factor stimulation, phosphorylated and binds to the 3'-UTR of CDKN1B/p27 mRNA, inducing a local conformational change that exposes miRNA-binding sites, promoting association of miR-221 and miR-222, efficient suppression of CDKN1B/p27 expression, and rapid entry to the cell cycle. Acts as a post-transcriptional repressor of E2F3 mRNAs by binding to its 3'-UTR and facilitating miRNA regulation. Represses a program of genes necessary to maintain genomic stability such as key mitotic, DNA repair and DNA replication factors. Its ability to repress those target mRNAs is regulated by the lncRNA NORAD (non-coding RNA activated by DNA damage) which, due to its high abundance and multitude of PUMILIO binding sites, is able to sequester a significant fraction of PUM1 and PUM2 in the cytoplasm. Involved in neuronal functions by regulating ATXN1 mRNA levels: acts by binding to the 3'-UTR of ATXN1 transcripts, leading to their down-regulation independently of the miRNA machinery. Plays a role in cytoplasmic sensing of viral infection. In testis, acts as a post-transcriptional regulator of spermatogenesis by binding to the 3'-UTR of mRNAs coding for regulators of p53/TP53. Involved in embryonic stem cell renewal by facilitating the exit from the ground state: acts by targeting mRNAs coding for naive pluripotency transcription factors and accelerates their down-regulation at the onset of differentiation. Binds specifically to miRNA MIR199A precursor, with PUM2, regulates miRNA MIR199A expression at a postranscriptional level. The polypeptide is Pumilio homolog 1 (PUM1) (Pongo abelii (Sumatran orangutan)).